The chain runs to 278 residues: 4-deoxy-L-threo-5-hexosulose-uronate ketol-isomerase (278 aa).

Positions 196, 198, 203, and 245 each coordinate Zn(2+).

It belongs to the KduI family. Requires Zn(2+) as cofactor.

The enzyme catalyses 5-dehydro-4-deoxy-D-glucuronate = 3-deoxy-D-glycero-2,5-hexodiulosonate. It participates in glycan metabolism; pectin degradation; 2-dehydro-3-deoxy-D-gluconate from pectin: step 4/5. Catalyzes the isomerization of 5-dehydro-4-deoxy-D-glucuronate to 3-deoxy-D-glycero-2,5-hexodiulosonate. The protein is 4-deoxy-L-threo-5-hexosulose-uronate ketol-isomerase of Enterobacter sp. (strain 638).